The chain runs to 466 residues: Soluble pyridine nucleotide transhydrogenase (466 aa).

Residue 36–45 coordinates FAD; that stretch reads EKESSVGGGC.

Belongs to the class-I pyridine nucleotide-disulfide oxidoreductase family. FAD is required as a cofactor.

It is found in the cytoplasm. It carries out the reaction NAD(+) + NADPH = NADH + NADP(+). Functionally, conversion of NADPH, generated by peripheral catabolic pathways, to NADH, which can enter the respiratory chain for energy generation. The sequence is that of Soluble pyridine nucleotide transhydrogenase from Vibrio vulnificus (strain CMCP6).